Reading from the N-terminus, the 483-residue chain is Dual specificity protein phosphatase 10 (483 aa).

The 118-residue stretch at 169-286 (PSQGPVIIDC…FKQNHGNLCD (118 aa)) folds into the Rhodanese domain. Positions 200–216 (KISRRRLQQGKITVLDL) are interaction with MAP kinases. The 144-residue stretch at 322-465 (ELTPILPFLF…LLEFEEDLNN (144 aa)) folds into the Tyrosine-protein phosphatase domain. C409 acts as the Phosphocysteine intermediate in catalysis.

Belongs to the protein-tyrosine phosphatase family. Non-receptor class dual specificity subfamily. As to quaternary structure, monomer. Interacts with MAPK14.

The protein localises to the cytoplasm. The protein resides in the nucleus. The catalysed reaction is O-phospho-L-tyrosyl-[protein] + H2O = L-tyrosyl-[protein] + phosphate. It carries out the reaction O-phospho-L-seryl-[protein] + H2O = L-seryl-[protein] + phosphate. The enzyme catalyses O-phospho-L-threonyl-[protein] + H2O = L-threonyl-[protein] + phosphate. In terms of biological role, protein phosphatase involved in the inactivation of MAP kinases. Has a specificity for the MAPK11/MAPK12/MAPK13/MAPK14 subfamily. It preferably dephosphorylates p38. The chain is Dual specificity protein phosphatase 10 (Dusp10) from Mus musculus (Mouse).